We begin with the raw amino-acid sequence, 431 residues long: Glutamate-1-semialdehyde 2,1-aminomutase (431 aa).

K269 is subject to N6-(pyridoxal phosphate)lysine.

It belongs to the class-III pyridoxal-phosphate-dependent aminotransferase family. HemL subfamily. Homodimer. The cofactor is pyridoxal 5'-phosphate.

The protein localises to the cytoplasm. It carries out the reaction (S)-4-amino-5-oxopentanoate = 5-aminolevulinate. It functions in the pathway porphyrin-containing compound metabolism; protoporphyrin-IX biosynthesis; 5-aminolevulinate from L-glutamyl-tRNA(Glu): step 2/2. This Francisella tularensis subsp. holarctica (strain LVS) protein is Glutamate-1-semialdehyde 2,1-aminomutase.